A 524-amino-acid polypeptide reads, in one-letter code: MKKFDKLGLDNIKEIFHNLSYDELNAHEKANNEGLSTDNDTFCVDTGIFTGRSPKDKYFVKQDPSSKYIAWGKVNQPITKELFDKLLTKAKQELSGKKIYVQDVFCGASLQSRKAVRFVTEIAWQAHFVKNMFIRPSQEELENFKADFIVYNACKCINEDYKQDGLNSEVFVIFNVEENIAVIGGTWYGGEMKKGIFSMMNYWLPLENKLSMHCSANVGEKDDVALFFGLSGTGKTTLSTDPKRRLIGDDEHGWDDEGVFNFEGGCYAKTINLNPEHEPEIYGAIKRNALLENVVLRADKSVDYADASKTENTRVSYPIEHIENHEPSLKAGHPKNIIFLSADAFGILPPVSKLSKEQAMYYFLSGYTAKVAGTERGITEPQATFSACFGEPFMPLHPTVYARLLGEKIEKHEVNVYLVNTGWSGGSYSVGKRMSIKATRACINAILDGSITKCEFENFEVFDLAIPKALEGVESVLLNPINTWLDKNAYIATRDKLAHMFIQNFKRYEDVKEGIEFSKFGPKI.

Arg-52, Tyr-188, and Lys-194 together coordinate substrate. ATP-binding positions include Lys-194, His-213, and 229 to 237; that span reads GLSGTGKTT. Lys-194 and His-213 together coordinate Mn(2+). Mn(2+) is bound at residue Asp-250. Residues Glu-278, Arg-314, and Thr-439 each coordinate ATP. A substrate-binding site is contributed by Arg-314.

This sequence belongs to the phosphoenolpyruvate carboxykinase (ATP) family. Mn(2+) serves as cofactor.

It is found in the cytoplasm. It catalyses the reaction oxaloacetate + ATP = phosphoenolpyruvate + ADP + CO2. The protein operates within carbohydrate biosynthesis; gluconeogenesis. In terms of biological role, involved in the gluconeogenesis. Catalyzes the conversion of oxaloacetate (OAA) to phosphoenolpyruvate (PEP) through direct phosphoryl transfer between the nucleoside triphosphate and OAA. The chain is Phosphoenolpyruvate carboxykinase (ATP) from Campylobacter jejuni (strain RM1221).